Consider the following 421-residue polypeptide: GTPase Obg (421 aa).

The Obg domain occupies 4-161; sequence LHFIDEAFNE…FKIKIQLKVL (158 aa). One can recognise an OBG-type G domain in the interval 162-327; sequence ADVGLLGFPS…LKYAIKNLLQ (166 aa). GTP contacts are provided by residues 168-175, 193-197, 214-217, 281-284, and 308-310; these read GFPSVGKS, FTTLF, DLPG, NKMD, and SLI. Mg(2+) contacts are provided by S175 and T195. Residues 343–421 form the OCT domain; it reads DLNSETQTFT…ICNYLFDFVI (79 aa).

This sequence belongs to the TRAFAC class OBG-HflX-like GTPase superfamily. OBG GTPase family. In terms of assembly, monomer. Requires Mg(2+) as cofactor.

It localises to the cytoplasm. An essential GTPase which binds GTP, GDP and possibly (p)ppGpp with moderate affinity, with high nucleotide exchange rates and a fairly low GTP hydrolysis rate. Plays a role in control of the cell cycle, stress response, ribosome biogenesis and in those bacteria that undergo differentiation, in morphogenesis control. This is GTPase Obg from Phytoplasma australiense.